A 264-amino-acid chain; its full sequence is 3-methyl-2-oxobutanoate hydroxymethyltransferase 1 (264 aa).

Mg(2+) contacts are provided by D45 and D84. 3-methyl-2-oxobutanoate-binding positions include 45-46 (DS), D84, and K112. A Mg(2+)-binding site is contributed by E114. The active-site Proton acceptor is the E181.

This sequence belongs to the PanB family. In terms of assembly, homodecamer; pentamer of dimers. Requires Mg(2+) as cofactor.

It localises to the cytoplasm. The catalysed reaction is 3-methyl-2-oxobutanoate + (6R)-5,10-methylene-5,6,7,8-tetrahydrofolate + H2O = 2-dehydropantoate + (6S)-5,6,7,8-tetrahydrofolate. The protein operates within cofactor biosynthesis; (R)-pantothenate biosynthesis; (R)-pantoate from 3-methyl-2-oxobutanoate: step 1/2. Functionally, catalyzes the reversible reaction in which hydroxymethyl group from 5,10-methylenetetrahydrofolate is transferred onto alpha-ketoisovalerate to form ketopantoate. The sequence is that of 3-methyl-2-oxobutanoate hydroxymethyltransferase 1 from Aliivibrio fischeri (strain ATCC 700601 / ES114) (Vibrio fischeri).